Here is a 266-residue protein sequence, read N- to C-terminus: Apoptosis regulator ced-9 (266 aa).

Residues 1–58 are disordered; it reads MVDSMDMANSSQNTFRRRTMATSEMREFLSTKDAEPNNFGMQTIPESPTPSTPTRRMS. Residues 24–35 show a composition bias toward basic and acidic residues; that stretch reads EMREFLSTKDAE. A BH4 motif is present at residues 75 to 94; it reads IQGFVVDYFTYRIAQNGLDW. The BH1 signature appears at 156–174; sequence NTPCPMSYGRLIGLISFGG. Residues 208–223 carry the BH2 motif; the sequence is SWKEHNRSWADFMKLG.

This sequence belongs to the Bcl-2 family. Interacts with asymmetric homodimer ced-4; the interaction sequesters ced-4. Interacts with egl-1; the interaction results in ced-4 release. Interacts with dre-1; the interaction inhibits ced-9 activity, either directly or indirectly. Interacts with dct-1. May form a complex composed of ced-9, ced-4 and mac-1.

The protein resides in the perikaryon. It localises to the synapse. The protein localises to the endomembrane system. It is found in the mitochondrion membrane. Functionally, plays a major role in programmed cell death (PCD, apoptosis). egl-1 binds to and directly inhibits the activity of ced-9, releasing the cell death activator ced-4 from a ced-9/ced-4 containing protein complex and allowing ced-4 to activate the cell-killing caspase ced-3. During larval development, required for the elimination of transient presynaptic components downstream of egl-1 and upstream of ced-4 and ced-3 apoptotic pathway. In Caenorhabditis briggsae, this protein is Apoptosis regulator ced-9 (ced-9).